A 518-amino-acid polypeptide reads, in one-letter code: Nuclear receptor ROR-gamma (518 aa).

A modulating region spans residues 1–30 (MDRAPQRQHQASRELLAAKKTHTSQIEVIP). 2 consecutive NR C4-type zinc fingers follow at residues 31 to 51 (CKIC…CEGC) and 67 to 91 (CTRQ…LQKC). Positions 31-96 (CKICGDKSSG…RLQKCLALGM (66 aa)) form a DNA-binding region, nuclear receptor. 2 disordered regions span residues 105-183 (RMSK…SGSG) and 238-258 (HPGL…SFRS). Residues 109–118 (KQRDSLHAEV) show a composition bias toward basic and acidic residues. Low complexity predominate over residues 119 to 130 (QKQLQQRQQQQQ). One can recognise an NR LBD domain in the interval 269 to 508 (EIEHLVQSVC…PPLYKELFST (240 aa)). Positions 501-506 (LYKELF) match the AF-2 motif.

The protein belongs to the nuclear hormone receptor family. NR1 subfamily. As to quaternary structure, interacts (via AF-2 motif) with the coactivators NCOA1, NCOA2 and PPARGC1A (via LXXLL motif). Interacts with the corepressor NCOR1. Interacts with CRY1. Interacts (via AF-2 motif) with PROX1. Interacts with FOXP3. Interacts with NR0B2.

It is found in the nucleus. Functionally, nuclear receptor that binds DNA as a monomer to ROR response elements (RORE) containing a single core motif half-site 5'-AGGTCA-3' preceded by a short A-T-rich sequence. Key regulator of cellular differentiation, immunity, peripheral circadian rhythm as well as lipid, steroid, xenobiotics and glucose metabolism. Considered to have intrinsic transcriptional activity, have some natural ligands like oxysterols that act as agonists (25-hydroxycholesterol) or inverse agonists (7-oxygenated sterols), enhancing or repressing the transcriptional activity, respectively. Recruits distinct combinations of cofactors to target gene regulatory regions to modulate their transcriptional expression, depending on the tissue, time and promoter contexts. Regulates the circadian expression of clock genes such as CRY1, BMAL1 and NR1D1 in peripheral tissues and in a tissue-selective manner. Competes with NR1D1 for binding to their shared DNA response element on some clock genes such as BMAL1, CRY1 and NR1D1 itself, resulting in NR1D1-mediated repression or RORC-mediated activation of the expression, leading to the circadian pattern of clock genes expression. Therefore influences the period length and stability of the clock. Involved in the regulation of the rhythmic expression of genes involved in glucose and lipid metabolism, including PLIN2 and AVPR1A. Negative regulator of adipocyte differentiation through the regulation of early phase genes expression, such as MMP3. Controls adipogenesis as well as adipocyte size and modulates insulin sensitivity in obesity. In liver, has specific and redundant functions with RORA as positive or negative modulator of expression of genes encoding phase I and Phase II proteins involved in the metabolism of lipids, steroids and xenobiotics, such as SULT1E1. Also plays a role in the regulation of hepatocyte glucose metabolism through the regulation of G6PC1 and PCK1. Essential for thymopoiesis and the development of several secondary lymphoid tissues, including lymph nodes and Peyer's patches. Required for the generation of LTi (lymphoid tissue inducer) cells. Regulates thymocyte survival through DNA-binding on ROREs of target gene promoter regions and recruitment of coactivaros via the AF-2. Also plays a key role, downstream of IL6 and TGFB and synergistically with RORA, for lineage specification of uncommitted CD4(+) T-helper (T(H)) cells into T(H)17 cells, antagonizing the T(H)1 program. Probably regulates IL17 and IL17F expression on T(H) by binding to the essential enhancer conserved non-coding sequence 2 (CNS2) in the IL17-IL17F locus. May also play a role in the pre-TCR activation cascade leading to the maturation of alpha/beta T-cells and may participate in the regulation of DNA accessibility in the TCR-J(alpha) locus. Regulates the rhythmic expression of PROX1 and promotes its nuclear localization. Plays an indispensable role in the induction of IFN-gamma dependent anti-mycobacterial systemic immunity. The chain is Nuclear receptor ROR-gamma (RORC) from Pongo abelii (Sumatran orangutan).